The following is a 246-amino-acid chain: Ribonuclease 3 (246 aa).

The 123-residue stretch at 30–152 (ISWIEKNLGH…MIGAIFLESG (123 aa)) folds into the RNase III domain. Mg(2+) is bound at residue E65. Residue D69 is part of the active site. Mg(2+) contacts are provided by D138 and E141. E141 is a catalytic residue. The DRBM domain occupies 177–246 (HPKSALQEWA…AQALLDILAQ (70 aa)).

The protein belongs to the ribonuclease III family. Homodimer. Requires Mg(2+) as cofactor.

The protein resides in the cytoplasm. It carries out the reaction Endonucleolytic cleavage to 5'-phosphomonoester.. Digests double-stranded RNA. Involved in the processing of primary rRNA transcript to yield the immediate precursors to the large and small rRNAs (23S and 16S). Processes some mRNAs, and tRNAs when they are encoded in the rRNA operon. Processes pre-crRNA and tracrRNA of type II CRISPR loci if present in the organism. This Zymomonas mobilis subsp. mobilis (strain ATCC 31821 / ZM4 / CP4) protein is Ribonuclease 3.